The following is a 151-amino-acid chain: Differentiation-associated protein 2 (151 aa).

The N-terminal stretch at 1–22 (MKQIIRLITTLLLLSLIGITCA) is a signal peptide.

It localises to the endoplasmic reticulum. It is found in the vacuole. Functionally, has an essential role in the initiation of differentiation. Also required for cAMP signaling. In Dictyostelium discoideum (Social amoeba), this protein is Differentiation-associated protein 2 (dia2).